We begin with the raw amino-acid sequence, 355 residues long: tRNA (guanine-N(1)-)-methyltransferase (355 aa).

S-adenosyl-L-methionine contacts are provided by residues Gly-109 and 129–134 (IGDYVL).

The protein belongs to the RNA methyltransferase TrmD family. In terms of assembly, homodimer.

The protein localises to the cytoplasm. The enzyme catalyses guanosine(37) in tRNA + S-adenosyl-L-methionine = N(1)-methylguanosine(37) in tRNA + S-adenosyl-L-homocysteine + H(+). Its function is as follows. Specifically methylates guanosine-37 in various tRNAs. This Chlamydia caviae (strain ATCC VR-813 / DSM 19441 / 03DC25 / GPIC) (Chlamydophila caviae) protein is tRNA (guanine-N(1)-)-methyltransferase.